Consider the following 284-residue polypeptide: 2-dehydro-3-deoxyphosphooctonate aldolase (284 aa).

The protein belongs to the KdsA family.

Its subcellular location is the cytoplasm. It carries out the reaction D-arabinose 5-phosphate + phosphoenolpyruvate + H2O = 3-deoxy-alpha-D-manno-2-octulosonate-8-phosphate + phosphate. Its pathway is carbohydrate biosynthesis; 3-deoxy-D-manno-octulosonate biosynthesis; 3-deoxy-D-manno-octulosonate from D-ribulose 5-phosphate: step 2/3. The protein operates within bacterial outer membrane biogenesis; lipopolysaccharide biosynthesis. This is 2-dehydro-3-deoxyphosphooctonate aldolase from Burkholderia cenocepacia (strain HI2424).